A 76-amino-acid chain; its full sequence is Exodeoxyribonuclease 7 small subunit (76 aa).

This sequence belongs to the XseB family. Heterooligomer composed of large and small subunits.

It localises to the cytoplasm. It catalyses the reaction Exonucleolytic cleavage in either 5'- to 3'- or 3'- to 5'-direction to yield nucleoside 5'-phosphates.. Its function is as follows. Bidirectionally degrades single-stranded DNA into large acid-insoluble oligonucleotides, which are then degraded further into small acid-soluble oligonucleotides. The chain is Exodeoxyribonuclease 7 small subunit from Latilactobacillus sakei subsp. sakei (strain 23K) (Lactobacillus sakei subsp. sakei).